We begin with the raw amino-acid sequence, 453 residues long: uncharacterized protein (453 aa).

The region spanning 5–63 is the TRAM domain; the sequence is LLKKNQSIELTIEDLTHDGSGVGKIDGYPFFIPNTLPGEKVTAKIIKLNKNYGFARMEN. 4 residues coordinate [4Fe-4S] cluster: cysteine 76, cysteine 82, cysteine 85, and cysteine 162. Residues glutamine 285, tyrosine 314, glutamate 335, and aspartate 383 each coordinate S-adenosyl-L-methionine. Cysteine 410 acts as the Nucleophile in catalysis.

Belongs to the class I-like SAM-binding methyltransferase superfamily. RNA M5U methyltransferase family.

This is an uncharacterized protein from Listeria monocytogenes serovar 1/2a (strain ATCC BAA-679 / EGD-e).